The primary structure comprises 467 residues: Probable protein phosphatase 2C 55 (467 aa).

One can recognise a PPM-type phosphatase domain in the interval 222 to 458; the sequence is SCYLPHPDKE…DDITVVVSYV (237 aa). Mn(2+)-binding residues include Asp252, Gly253, Asp383, and Asp449.

This sequence belongs to the PP2C family. Mg(2+) is required as a cofactor. The cofactor is Mn(2+).

The catalysed reaction is O-phospho-L-seryl-[protein] + H2O = L-seryl-[protein] + phosphate. The enzyme catalyses O-phospho-L-threonyl-[protein] + H2O = L-threonyl-[protein] + phosphate. The sequence is that of Probable protein phosphatase 2C 55 from Arabidopsis thaliana (Mouse-ear cress).